A 74-amino-acid polypeptide reads, in one-letter code: Large ribosomal subunit protein bL31 (74 aa).

The Zn(2+) site is built by C16, C18, C38, and C41.

The protein belongs to the bacterial ribosomal protein bL31 family. Type A subfamily. As to quaternary structure, part of the 50S ribosomal subunit. Requires Zn(2+) as cofactor.

Binds the 23S rRNA. The protein is Large ribosomal subunit protein bL31 of Salinispora arenicola (strain CNS-205).